Here is a 484-residue protein sequence, read N- to C-terminus: tRNA-2-methylthio-N(6)-dimethylallyladenosine synthase (484 aa).

The region spanning 36-153 (GKLYIKTHGC…LPELIRARRE (118 aa)) is the MTTase N-terminal domain. [4Fe-4S] cluster-binding residues include Cys-45, Cys-82, Cys-116, Cys-190, Cys-194, and Cys-197. The 240-residue stretch at 176–415 (RAEGPSAFVS…HINAHAASIS (240 aa)) folds into the Radical SAM core domain. The 64-residue stretch at 416 to 479 (QSMVGSVQRV…SNSLRGRIQL (64 aa)) folds into the TRAM domain. The disordered stretch occupies residues 428-450 (EGPSRRDPNELTGKSENMRPVNF).

The protein belongs to the methylthiotransferase family. MiaB subfamily. Monomer. Requires [4Fe-4S] cluster as cofactor.

The protein resides in the cytoplasm. It catalyses the reaction N(6)-dimethylallyladenosine(37) in tRNA + (sulfur carrier)-SH + AH2 + 2 S-adenosyl-L-methionine = 2-methylsulfanyl-N(6)-dimethylallyladenosine(37) in tRNA + (sulfur carrier)-H + 5'-deoxyadenosine + L-methionine + A + S-adenosyl-L-homocysteine + 2 H(+). Its function is as follows. Catalyzes the methylthiolation of N6-(dimethylallyl)adenosine (i(6)A), leading to the formation of 2-methylthio-N6-(dimethylallyl)adenosine (ms(2)i(6)A) at position 37 in tRNAs that read codons beginning with uridine. This is tRNA-2-methylthio-N(6)-dimethylallyladenosine synthase from Xanthomonas euvesicatoria pv. vesicatoria (strain 85-10) (Xanthomonas campestris pv. vesicatoria).